The sequence spans 283 residues: Polyamine aminopropyltransferase (283 aa).

The region spanning 5-238 (STWIDEYHKG…GIWSWTFASE (234 aa)) is the PABS domain. S-methyl-5'-thioadenosine is bound at residue glutamine 32. Residues histidine 63 and aspartate 87 each contribute to the spermidine site. Residues glutamate 107 and 139–140 (DG) contribute to the S-methyl-5'-thioadenosine site. The Proton acceptor role is filled by aspartate 158. Residue 158-161 (DCSD) coordinates spermidine.

It belongs to the spermidine/spermine synthase family. As to quaternary structure, homodimer or homotetramer.

The protein resides in the cytoplasm. It catalyses the reaction S-adenosyl 3-(methylsulfanyl)propylamine + putrescine = S-methyl-5'-thioadenosine + spermidine + H(+). It functions in the pathway amine and polyamine biosynthesis; spermidine biosynthesis; spermidine from putrescine: step 1/1. Functionally, catalyzes the irreversible transfer of a propylamine group from the amino donor S-adenosylmethioninamine (decarboxy-AdoMet) to putrescine (1,4-diaminobutane) to yield spermidine. The chain is Polyamine aminopropyltransferase from Prochlorococcus marinus (strain MIT 9312).